The primary structure comprises 62 residues: Large ribosomal subunit protein uL30 (62 aa).

This sequence belongs to the universal ribosomal protein uL30 family. In terms of assembly, part of the 50S ribosomal subunit.

The sequence is that of Large ribosomal subunit protein uL30 from Roseobacter denitrificans (strain ATCC 33942 / OCh 114) (Erythrobacter sp. (strain OCh 114)).